Here is a 1013-residue protein sequence, read N- to C-terminus: Receptor-type tyrosine-protein phosphatase N2 (1013 aa).

The N-terminal stretch at 1–19 (MALPLLLLLLLLLPPRVLP) is a signal peptide. Residues 1-419 (MALPLLLLLL…PGALPFAKPL (419 aa)) are involved in localization to secretory granules; interaction with CPE. Residues 20 to 613 (AAPSSVPHGR…QAEQEDSTKF (594 aa)) lie on the Extracellular side of the membrane. 4 disordered regions span residues 116-137 (RHPE…ERRY), 273-302 (MPRP…TGEG), 342-382 (DHRG…VQDD), and 401-487 (LQDH…SLPA). A compositionally biased stretch (basic and acidic residues) spans 419 to 430 (LKMERKKSERPE). Residues Ser434 and Ser435 each carry the phosphoserine modification. Asn562 carries an N-linked (GlcNAc...) asparagine glycan. The chain crosses the membrane as a helical span at residues 614 to 634 (IALTLVSLACILGVLLASGLI). The Cytoplasmic segment spans residues 635–1013 (YCLRHSSQHR…VNAILKALPQ (379 aa)). The Tyrosine-based internalization motif motif lies at 664–673 (YQELCRQRMA). Positions 673–717 (ATRPPDRPEGPHTSRISSVSSQFSDGPMPSPSARSSASSWSEEPV) are disordered. The span at 686–696 (SRISSVSSQFS) shows a compositional bias: polar residues. Phosphoserine is present on residues Ser690 and Ser696. Over residues 703–717 (PSARSSASSWSEEPV) the composition is skewed to low complexity. A Tyrosine-protein phosphatase domain is found at 743-1003 (LEKEWEALCA…EFALTAVAEE (261 aa)). Substrate is bound by residues Asp911 and 943–949 (CSDGAGR). Cys943 acts as the Phosphocysteine intermediate in catalysis. Residue Lys968 is modified to N6-acetyllysine. Residue Gln988 participates in substrate binding. The Leucine-based sorting signal signature appears at 1002-1008 (EEVNAIL).

Belongs to the protein-tyrosine phosphatase family. Receptor class 8 subfamily. In terms of assembly, self-associates. Interacts (via cytoplasmic domain) with PTPRN (via cytoplasmic domain). Interacts (precursor form) with CPE. Interacts with HAP1. Interacts with AP2A1 or AP2A2 and AP1G1; indicative for an association with adaptor protein complex 2 (AP-2) and adaptor protein complex 1 (AP-1). Interacts with AP2M1; indicative for an association with adaptor protein complex 2 (AP-2). Interacts with MYO5A. In terms of processing, subject to proteolytic cleavage at multiple sites. Detected in pancreatic islets and adrenal medulla.

The protein localises to the cytoplasmic vesicle. Its subcellular location is the secretory vesicle membrane. It is found in the secretory vesicle. It localises to the synaptic vesicle membrane. It carries out the reaction O-phospho-L-tyrosyl-[protein] + H2O = L-tyrosyl-[protein] + phosphate. Plays a role in vesicle-mediated secretory processes. Required for normal accumulation of secretory vesicles in hippocampus, pituitary and pancreatic islets. Required for the accumulation of normal levels of insulin-containing vesicles and preventing their degradation. Plays a role in insulin secretion in response to glucose stimuli. Required for normal accumulation of the neurotransmitters norepinephrine, dopamine and serotonin in the brain. In females, but not in males, required for normal accumulation and secretion of pituitary hormones, such as luteinizing hormone (LH) and follicle-stimulating hormone (FSH). Required to maintain normal levels of renin expression and renin release. May regulate catalytic active protein-tyrosine phosphatases such as PTPRA through dimerization. Has phosphatidylinositol phosphatase activity; the PIPase activity is involved in its ability to regulate insulin secretion. Can dephosphorylate phosphatidylinositol 4,5-biphosphate, phosphatidylinositol 5-phosphate and phosphatidylinositol 3-phosphate. Regulates PI(4,5)P2 level in the plasma membrane and localization of cofilin at the plasma membrane and thus is indirectly involved in regulation of actin dynamics related to cell migration and metastasis; upon hydrolysis of PI(4,5)P2 cofilin is released from the plasma membrane and acts in the cytoplasm in severing F-actin filaments. In Macaca nemestrina (Pig-tailed macaque), this protein is Receptor-type tyrosine-protein phosphatase N2 (PTPRN2).